The primary structure comprises 1621 residues: ABC transporter A family member 2 (1621 aa).

A run of 7 helical transmembrane segments spans residues 30–50 (ILFP…VMAF), 234–254 (SVFI…DLVI), 276–296 (ISWM…ISII), 309–329 (GVVI…AFIL), 338–358 (FCGL…IFVA), 365–385 (GAKL…IFAM), and 405–425 (NQVI…VWYL). One can recognise an ABC transporter 1 domain in the interval 484–717 (ISIRNLRKEY…FGCGYLLTCS (234 aa)). ATP is bound at residue 520 to 527 (GPNGSGKS). A run of 7 helical transmembrane segments spans residues 856–876 (FFLT…MYKA), 1033–1053 (IVYF…SFAG), 1083–1103 (VWDY…LAGI), 1111–1131 (FGLM…LSYL), 1142–1162 (ATGA…IISL), 1183–1203 (VDIV…LFLV), and 1227–1247 (GSPM…IMIL). Positions 1293–1528 (LQFRNLHKLF…FGAGYTFDVK (236 aa)) constitute an ABC transporter 2 domain. 1331-1338 (GLNGAGKT) is a binding site for ATP.

The protein belongs to the ABC transporter superfamily. ABCA family.

Its subcellular location is the membrane. The polypeptide is ABC transporter A family member 2 (abcA2) (Dictyostelium discoideum (Social amoeba)).